The primary structure comprises 547 residues: CTP synthase (547 aa).

An amidoligase domain region spans residues 1 to 273 (MNNKKLKSKF…DHFILNHFQL (273 aa)). S19 contacts CTP. S19 contributes to the UTP binding site. Position 20–25 (20–25 (SLGKGI)) interacts with ATP. Position 60 (Y60) interacts with L-glutamine. D77 provides a ligand contact to ATP. Mg(2+) contacts are provided by D77 and E147. Residues 154-156 (DIE), 194-199 (KTKPTQ), and K230 contribute to the CTP site. UTP contacts are provided by residues 194–199 (KTKPTQ) and K230. The Glutamine amidotransferase type-1 domain maps to 306–539 (YVILHDAYLS…VEAALLKNGK (234 aa)). Residue G361 participates in L-glutamine binding. The active-site Nucleophile; for glutamine hydrolysis is C388. Residues 389–392 (FGMQ), E412, and R466 each bind L-glutamine. Active-site residues include H512 and E514.

It belongs to the CTP synthase family. Homotetramer.

The enzyme catalyses UTP + L-glutamine + ATP + H2O = CTP + L-glutamate + ADP + phosphate + 2 H(+). It catalyses the reaction L-glutamine + H2O = L-glutamate + NH4(+). It carries out the reaction UTP + NH4(+) + ATP = CTP + ADP + phosphate + 2 H(+). It functions in the pathway pyrimidine metabolism; CTP biosynthesis via de novo pathway; CTP from UDP: step 2/2. Allosterically activated by GTP, when glutamine is the substrate; GTP has no effect on the reaction when ammonia is the substrate. The allosteric effector GTP functions by stabilizing the protein conformation that binds the tetrahedral intermediate(s) formed during glutamine hydrolysis. Inhibited by the product CTP, via allosteric rather than competitive inhibition. Functionally, catalyzes the ATP-dependent amination of UTP to CTP with either L-glutamine or ammonia as the source of nitrogen. Regulates intracellular CTP levels through interactions with the four ribonucleotide triphosphates. This chain is CTP synthase, found in Phytoplasma australiense.